The chain runs to 134 residues: Probable 4-amino-4-deoxy-L-arabinose-phosphoundecaprenol flippase subunit ArnF (134 aa).

Residues 1 to 5 (MNRRR) lie on the Cytoplasmic side of the membrane. Residues 6–26 (GILFALASVLLVSVAQLSMRW) traverse the membrane as a helical segment. Topologically, residues 27-45 (SMTRLPRPDQWLSVPSVDS) are periplasmic. Residues 46–66 (VALAVVLAAIFAYALSMLCWL) traverse the membrane as a helical segment. Over 67–77 (AALRDLPLGRA) the chain is Cytoplasmic. A helical transmembrane segment spans residues 78–98 (YSLLSISYALVYLLAASLPLF). Residues 99 to 101 (NES) lie on the Periplasmic side of the membrane. Residues 102–122 (FSFSKSLGVALVMLGVITINT) traverse the membrane as a helical segment. Residues 123-134 (RPARAPELRSSP) are Cytoplasmic-facing.

This sequence belongs to the ArnF family. In terms of assembly, heterodimer of ArnE and ArnF.

The protein localises to the cell inner membrane. It participates in bacterial outer membrane biogenesis; lipopolysaccharide biosynthesis. Translocates 4-amino-4-deoxy-L-arabinose-phosphoundecaprenol (alpha-L-Ara4N-phosphoundecaprenol) from the cytoplasmic to the periplasmic side of the inner membrane. The protein is Probable 4-amino-4-deoxy-L-arabinose-phosphoundecaprenol flippase subunit ArnF of Pseudomonas fluorescens (strain Pf0-1).